Here is a 289-residue protein sequence, read N- to C-terminus: Bis(5'-nucleosyl)-tetraphosphatase, symmetrical (289 aa).

Belongs to the Ap4A hydrolase family.

The catalysed reaction is P(1),P(4)-bis(5'-adenosyl) tetraphosphate + H2O = 2 ADP + 2 H(+). Hydrolyzes diadenosine 5',5'''-P1,P4-tetraphosphate to yield ADP. In Yersinia pseudotuberculosis serotype O:1b (strain IP 31758), this protein is Bis(5'-nucleosyl)-tetraphosphatase, symmetrical.